Here is a 365-residue protein sequence, read N- to C-terminus: Aminomethyltransferase (365 aa).

Belongs to the GcvT family. As to quaternary structure, the glycine cleavage system is composed of four proteins: P, T, L and H.

The enzyme catalyses N(6)-[(R)-S(8)-aminomethyldihydrolipoyl]-L-lysyl-[protein] + (6S)-5,6,7,8-tetrahydrofolate = N(6)-[(R)-dihydrolipoyl]-L-lysyl-[protein] + (6R)-5,10-methylene-5,6,7,8-tetrahydrofolate + NH4(+). In terms of biological role, the glycine cleavage system catalyzes the degradation of glycine. The protein is Aminomethyltransferase of Desulfitobacterium hafniense (strain Y51).